The chain runs to 333 residues: Photosystem II assembly lipoprotein Ycf48 (333 aa).

A signal peptide spans 1–23 (MKRLLNSATQLLLVLVLGISLSG). Cys-24 carries the N-palmitoyl cysteine lipid modification. A lipid anchor (S-diacylglycerol cysteine) is attached at Cys-24.

Belongs to the Ycf48 family. In terms of assembly, part of early PSII assembly complexes which includes D1 (psbA) and PsbI; not found in mature PSII. Binds to the lumenal side of PSII complexes. Interacts with YidC.

The protein resides in the cellular thylakoid membrane. Its function is as follows. A factor required for optimal assembly of photosystem II (PSII), acting in the early stages of PSII assembly. Also plays a role in replacement of photodamaged D1 (psbA). Assists YidC in synthesis of chlorophyll-binding proteins. The polypeptide is Photosystem II assembly lipoprotein Ycf48 (Synechococcus sp. (strain CC9605)).